A 931-amino-acid chain; its full sequence is Short transient receptor potential channel 6 (931 aa).

Residues 1-24 (MNQSPAAFGPRRGGSPAVVAGAGA) form a disordered region. Over 1 to 406 (MNQSPAAFGP…GLRQQTMAVK (406 aa)) the chain is Cytoplasmic. Over residues 13–24 (GGSPAVVAGAGA) the composition is skewed to low complexity. ANK repeat units lie at residues 131 to 160 (MGQN…LSRV), 162 to 188 (DALL…FAEG), and 217 to 246 (HDVT…RIER). Residues 407–427 (FLVVLAVAVGLPFLALVYWFA) traverse the membrane as a helical segment. Residues 428–438 (PCSKMGKIMRG) lie on the Extracellular side of the membrane. Residues 439–459 (PFMKFVAHAASFTIFLGLLVM) form a helical membrane-spanning segment. Over 460 to 487 (NAADRFEGTKILPNETSTDHAKQLFRMK) the chain is Cytoplasmic. A helical membrane pass occupies residues 488–508 (TSCFSWMEMLIISWVIGMIWA). Over 509 to 521 (ECKEIWTQGPKEY) the chain is Extracellular. Residues 522–542 (LFELWNMLDFGMLAIFAASFI) traverse the membrane as a helical segment. Residues 543–592 (ARFMAFWHASKAQSIIDANDTLKDLTKVTLGDNVKYYNLARIKWDPSDPQ) are Cytoplasmic-facing. The helical transmembrane segment at 593–613 (IISEGLYAIAVVLSFSRIAYI) threads the bilayer. Residues 614–636 (LPANESFGPLQISLGRTVKDIFK) are Extracellular-facing. Asn617 carries an N-linked (GlcNAc...) asparagine glycan. The stretch at 618–647 (ESFGPLQISLGRTVKDIFKFMVIFIMVFVA) is one ANK 4 repeat. Residues 637–657 (FMVIFIMVFVAFMIGMFNLYS) traverse the membrane as a helical segment. At 658–674 (YYIGAKQNEAFTTVEES) the chain is on the cytoplasmic side. Residues 675 to 695 (FKTLFWAIFGLSEVKSVVINY) form a helical membrane-spanning segment. The Extracellular portion of the chain corresponds to 696–706 (NHKFIENIGYV). A helical transmembrane segment spans residues 707–727 (LYGVYNVTMVIVLLNMLIAMI). Topologically, residues 728–931 (NSSFQEIEDD…MEPNQEESNR (204 aa)) are cytoplasmic. Position 815 is a phosphoserine (Ser815).

The protein belongs to the transient receptor (TC 1.A.4) family. STrpC subfamily. TRPC6 sub-subfamily. In terms of assembly, homodimer; forms channel complex. Interacts with MX1 and RNF24. Post-translationally, phosphorylated by FYN, leading to an increase of TRPC6 channel activity.

Its subcellular location is the cell membrane. The enzyme catalyses Ca(2+)(in) = Ca(2+)(out). Thought to form a receptor-activated non-selective calcium permeant cation channel. Probably is operated by a phosphatidylinositol second messenger system activated by receptor tyrosine kinases or G-protein coupled receptors. Activated by diacylglycerol (DAG) in a membrane-delimited fashion, independently of protein kinase C. Seems not to be activated by intracellular calcium store depletion. The sequence is that of Short transient receptor potential channel 6 from Bos taurus (Bovine).